The sequence spans 120 residues: Flagellar transcriptional regulator FlhD (120 aa).

The protein belongs to the FlhD family. Homodimer; disulfide-linked. Forms a heterohexamer composed of two FlhC and four FlhD subunits. Each FlhC binds a FlhD dimer, forming a heterotrimer, and a hexamer assembles by dimerization of two heterotrimers.

Its subcellular location is the cytoplasm. Its function is as follows. Functions in complex with FlhC as a master transcriptional regulator that regulates transcription of several flagellar and non-flagellar operons by binding to their promoter region. Activates expression of class 2 flagellar genes, including fliA, which is a flagellum-specific sigma factor that turns on the class 3 genes. Also regulates genes whose products function in a variety of physiological pathways. This is Flagellar transcriptional regulator FlhD from Erwinia tasmaniensis (strain DSM 17950 / CFBP 7177 / CIP 109463 / NCPPB 4357 / Et1/99).